We begin with the raw amino-acid sequence, 543 residues long: CTP synthase (543 aa).

Positions 1-265 are amidoligase domain; the sequence is MARYIFITGG…DDEVLAAFGI (265 aa). Ser13 lines the CTP pocket. Ser13 is a UTP binding site. 14–19 is an ATP binding site; that stretch reads SLGKGL. Position 54 (Tyr54) interacts with L-glutamine. Asp71 is a binding site for ATP. Asp71 and Glu139 together coordinate Mg(2+). CTP is bound by residues 146–148, 186–191, and Lys222; these read DIE and KTKPTQ. UTP-binding positions include 186 to 191 and Lys222; that span reads KTKPTQ. 238-240 contributes to the ATP binding site; sequence RDA. Residues 291-542 form the Glutamine amidotransferase type-1 domain; sequence TIAIVGKYTG…IQAAVVQSRL (252 aa). Gly353 serves as a coordination point for L-glutamine. Residue Cys380 is the Nucleophile; for glutamine hydrolysis of the active site. Residues 381-384, Glu404, and Arg470 each bind L-glutamine; that span reads FGMQ. Catalysis depends on residues His515 and Glu517.

Belongs to the CTP synthase family. Homotetramer.

It catalyses the reaction UTP + L-glutamine + ATP + H2O = CTP + L-glutamate + ADP + phosphate + 2 H(+). The enzyme catalyses L-glutamine + H2O = L-glutamate + NH4(+). The catalysed reaction is UTP + NH4(+) + ATP = CTP + ADP + phosphate + 2 H(+). The protein operates within pyrimidine metabolism; CTP biosynthesis via de novo pathway; CTP from UDP: step 2/2. With respect to regulation, allosterically activated by GTP, when glutamine is the substrate; GTP has no effect on the reaction when ammonia is the substrate. The allosteric effector GTP functions by stabilizing the protein conformation that binds the tetrahedral intermediate(s) formed during glutamine hydrolysis. Inhibited by the product CTP, via allosteric rather than competitive inhibition. Its function is as follows. Catalyzes the ATP-dependent amination of UTP to CTP with either L-glutamine or ammonia as the source of nitrogen. Regulates intracellular CTP levels through interactions with the four ribonucleotide triphosphates. The sequence is that of CTP synthase from Nitrobacter winogradskyi (strain ATCC 25391 / DSM 10237 / CIP 104748 / NCIMB 11846 / Nb-255).